We begin with the raw amino-acid sequence, 64 residues long: uncharacterized protein (64 aa).

This is an uncharacterized protein from Bdellovibrio phage phiMH2K (Bacteriophage phiMH2K).